The following is a 473-amino-acid chain: MKQLEKITPRDVDFSQWYTDTVINAKLASYGPVKGTIIFRPYGYAIWELIQKYLDAKFKELEVQNVYFPLLIPQSLFQKEKDHIEGFSPEIATVTRVGDTPLPEPLFIRPTSEVLMANFFKNEVKSYRDLPLIFNQWTNVMRWEKTTRPFLRTSEFLWQEGHTVHSERKEASDLTLKILDTYTEFAQNALLLPVIPGKKTEKEKFAGADSTYTIESLMHDGQALQCGTSHYFADNFSKPYEIKFQNKEGKLEHAYSTSWGVSTRLIGAIIMTHSDDNGLVLPSMVSPVQVRLIQIKETDEVIKVTEDIKEALKNKYRVDIDKTDKSFGFKISEAEIKGIPLRIEIGPRDLENNQVTISRRDTREKIQVNVNEVTNIVDQMIKEYDANLYAKALKNREERTSRANSIEEYKNILAQNQGFVLVPFCGEIECEDDVKKQTSTNSRCIPFDQDNKTEKCFNCNKDTTLKVYFARAY.

The protein belongs to the class-II aminoacyl-tRNA synthetase family. ProS type 3 subfamily. In terms of assembly, homodimer.

The protein resides in the cytoplasm. It carries out the reaction tRNA(Pro) + L-proline + ATP = L-prolyl-tRNA(Pro) + AMP + diphosphate. Functionally, catalyzes the attachment of proline to tRNA(Pro) in a two-step reaction: proline is first activated by ATP to form Pro-AMP and then transferred to the acceptor end of tRNA(Pro). This chain is Proline--tRNA ligase, found in Mesoplasma florum (strain ATCC 33453 / NBRC 100688 / NCTC 11704 / L1) (Acholeplasma florum).